The chain runs to 479 residues: Aldehyde dehydrogenase family 3 member B2 (479 aa).

Active-site residues include Glu-223 and Cys-257. At Cys-476 the chain carries Cysteine methyl ester. Residue Cys-476 is the site of S-geranylgeranyl cysteine attachment. The propeptide at 477 to 479 (TLL) is removed in mature form.

This sequence belongs to the aldehyde dehydrogenase family. In terms of processing, geranylgeranylation is important for localization to lipid droplets and enzyme activity. Expressed in testis, white adipose tissue, lung, small intestine, kidney, spleen and liver.

It localises to the lipid droplet. The catalysed reaction is an aldehyde + NAD(+) + H2O = a carboxylate + NADH + 2 H(+). It catalyses the reaction a long-chain fatty aldehyde + NAD(+) + H2O = a long-chain fatty acid + NADH + 2 H(+). The enzyme catalyses a medium-chain fatty aldehyde + NAD(+) + H2O = a medium-chain fatty acid + NADH + 2 H(+). It carries out the reaction hexadecanoate + NADH + 2 H(+) = hexadecanal + NAD(+) + H2O. The catalysed reaction is octanal + NAD(+) + H2O = octanoate + NADH + 2 H(+). Its pathway is alcohol metabolism; ethanol degradation; acetate from ethanol: step 2/2. In terms of biological role, oxidizes medium and long chain fatty aldehydes in lipid droplets into non-toxic fatty acids. The protein is Aldehyde dehydrogenase family 3 member B2 of Mus musculus (Mouse).